Consider the following 250-residue polypeptide: Probable transcriptional regulatory protein Mkms_2298 (250 aa).

This sequence belongs to the TACO1 family.

It localises to the cytoplasm. The sequence is that of Probable transcriptional regulatory protein Mkms_2298 from Mycobacterium sp. (strain KMS).